Consider the following 98-residue polypeptide: MEKRTPHTRLSQVKKLVNAGQVRTTRSALLNADELGLDFDGMCNVIIGLSESDFYKSMTTYSDHTIWQDVYRPRLVTGQVYLKITVIHDVLIVSFKEK.

Might be a dimer. Also reported to be a monomer. Crystallizes as a heterotetramer with MqsA, MqsR-MqsA(2)-MqsR. Purifies as a possible heterohexamer of 2 MqsR dimers and 1 MqsA dimer. When the 2 dissociate the MsqR mRNA interferase becomes active.

Its function is as follows. Toxic component of a type II toxin-antitoxin (TA) system. Plays a significant role in the control of biofilm formation and induction of persister cells in the presence of antibiotics. An mRNA interferase which has been reported to be translation-independent. It has also been reported to be translation-dependent. Cleavage has been reported to occur on either side of G in the sequence GCU. Also reported to cleave after C in GC(A/U) sequences. There are only 14 genes in E.coli W3110 (and probably also MG1655) that do not have a GCU sequence and thus are resistant to the mRNA interferase activity; among these is the gene for toxin GhoT. Overexpression of MqsR causes cessation of cell growth and inhibits cell proliferation via inhibition of translation as well as increasing persister cell formation; these effects are overcome by concomitant or subsequent expression of antitoxin MqsA. Cross-talk can occur between different TA systems. Ectopic expression of this toxin induces transcription of the relBEF TA system operon with specific cleavage of the relBEF mRNA produced. Regulates the expression of GhoT/GhoS, a type V TA system. Persistence depends on toxin GhoT activity, which MqsR controls at the post-transcriptional level by selectively degrading the antitoxin ghoS segment of the ghoST mRNA. Overexpression leads to a dramatic increase in tolerance to the antibiotic ofloxacin. This TA system mediates cell growth during bile acid deoxycholate stress by degrading mRNA for probable deoxycholate-binding protein YgiS; bile acid detergents such as deoxycholate are important for host defense against bacterial growth in the gall bladder and duodenum. Functionally, initially reported to act as a cotranscription factor with MqsA. Following further experiments, the MqsR-MqsA complex does not bind DNA and all reported data are actually due to a small fraction of free MqsA alone binding DNA. Addition of MqsR to a preformed MqsA-promoter DNA complex causes dissociation of the MqsA-DNA complex, probably causing derepression of MqsA-repressed transcripts. Does not bind DNA in the presence or absence of MqsA. The polypeptide is mRNA interferase toxin MqsR (Escherichia coli (strain K12)).